We begin with the raw amino-acid sequence, 324 residues long: Viral cathepsin (324 aa).

Positions 1–16 are cleaved as a signal peptide; sequence MNKIVLYLLVYGAVQC. The propeptide at 17 to 113 is activation peptide; it reads AAYDVLKAPN…VVLDRPPDKG (97 aa). 3 cysteine pairs are disulfide-bonded: Cys-134–Cys-175, Cys-168–Cys-208, and Cys-263–Cys-311. The active site involves Cys-137. Asn-159 is a glycosylation site (N-linked (GlcNAc...) asparagine; by host). Residues His-270 and Asn-290 contribute to the active site.

Belongs to the peptidase C1 family. In terms of processing, synthesized as an inactive proenzyme and activated by proteolytic removal of the inhibitory propeptide.

The enzyme catalyses Endopeptidase of broad specificity, hydrolyzing substrates of both cathepsin L and cathepsin B.. In terms of biological role, cysteine protease that plays an essential role in host liquefaction to facilitate horizontal transmission of the virus. May participate in the degradation of foreign protein expressed by the baculovirus system. The protein is Viral cathepsin (Vcath) of Choristoneura fumiferana nuclear polyhedrosis virus (CfMNPV).